A 277-amino-acid chain; its full sequence is NH(3)-dependent NAD(+) synthetase (277 aa).

Residue 36–43 (GLSGGIDS) coordinates ATP. Residue aspartate 42 participates in Mg(2+) binding. Arginine 118 serves as a coordination point for deamido-NAD(+). Threonine 138 provides a ligand contact to ATP. Glutamate 143 is a binding site for Mg(2+). ATP contacts are provided by lysine 167 and serine 189.

It belongs to the NAD synthetase family. In terms of assembly, homodimer.

It catalyses the reaction deamido-NAD(+) + NH4(+) + ATP = AMP + diphosphate + NAD(+) + H(+). Its pathway is cofactor biosynthesis; NAD(+) biosynthesis; NAD(+) from deamido-NAD(+) (ammonia route): step 1/1. Functionally, catalyzes the ATP-dependent amidation of deamido-NAD to form NAD. Uses ammonia as a nitrogen source. In Chlorobaculum parvum (strain DSM 263 / NCIMB 8327) (Chlorobium vibrioforme subsp. thiosulfatophilum), this protein is NH(3)-dependent NAD(+) synthetase.